Consider the following 149-residue polypeptide: 3-dehydroquinate dehydratase (149 aa).

The active-site Proton acceptor is the tyrosine 26. Substrate contacts are provided by asparagine 78, histidine 84, and aspartate 91. The active-site Proton donor is the histidine 104. Residues leucine 105–serine 106 and arginine 115 each bind substrate.

It belongs to the type-II 3-dehydroquinase family. In terms of assembly, homododecamer.

The catalysed reaction is 3-dehydroquinate = 3-dehydroshikimate + H2O. It participates in metabolic intermediate biosynthesis; chorismate biosynthesis; chorismate from D-erythrose 4-phosphate and phosphoenolpyruvate: step 3/7. Catalyzes a trans-dehydration via an enolate intermediate. This is 3-dehydroquinate dehydratase from Polynucleobacter asymbioticus (strain DSM 18221 / CIP 109841 / QLW-P1DMWA-1) (Polynucleobacter necessarius subsp. asymbioticus).